The following is a 418-amino-acid chain: AP-3 complex subunit mu-1 (418 aa).

The 242-residue stretch at 176 to 417 (NNEAYFDVVE…VTKAGKFQVR (242 aa)) folds into the MHD domain.

This sequence belongs to the adaptor complexes medium subunit family. As to quaternary structure, adaptor protein complex 3 (AP-3) is a heterotetramer composed of two large adaptins (delta-type subunit AP3D1 and beta-type subunit AP3B1 or AP3B2), a medium adaptin (mu-type subunit AP3M1 or AP3M2) and a small adaptin (sigma-type subunit APS1 or AP3S2). Interacts with AGAP1. AP-3 associates with the BLOC-1 complex. In terms of assembly, (Microbial infection) Interacts with human respiratory virus (HRSV) matrix protein; this interaction plays an essential role in trafficking the matrix protein in host cells.

It is found in the golgi apparatus. The protein localises to the cytoplasmic vesicle membrane. Its function is as follows. Part of the AP-3 complex, an adaptor-related complex which is not clathrin-associated. The complex is associated with the Golgi region as well as more peripheral structures. It facilitates the budding of vesicles from the Golgi membrane and may be directly involved in trafficking to lysosomes. In concert with the BLOC-1 complex, AP-3 is required to target cargos into vesicles assembled at cell bodies for delivery into neurites and nerve terminals. This chain is AP-3 complex subunit mu-1 (AP3M1), found in Homo sapiens (Human).